A 1025-amino-acid polypeptide reads, in one-letter code: Complement receptor type 2 (1025 aa).

An N-terminal signal peptide occupies residues 1-11 (MLTWFLFYFSE). A Sushi 1 domain is found at 12 to 75 (ISCDPPPEVK…WDKAPPICES (64 aa)). Over 12-963 (ISCDPPPEVK…PLALCKYRRW (952 aa)) the chain is Extracellular. Cystine bridges form between cysteine 14-cysteine 56 and cysteine 42-cysteine 73. Residues asparagine 77 and asparagine 113 are each glycosylated (N-linked (GlcNAc...) asparagine). Sushi domains are found at residues 80 to 140 (ISCS…VCES), 144 to 204 (LECP…TCKE), 205 to 265 (AQCE…VCKE), 266 to 336 (ILCP…YCVL), 341 to 400 (VLCL…VCEK), 401 to 460 (GCQA…QCTV), 461 to 516 (AECK…LCKE), 517 to 587 (ITCP…LCKL), 592 to 651 (VQCT…LCKK), 652 to 706 (EGCE…VCTV), 707 to 771 (ILCQ…QCLQ), 776 to 835 (THCP…TCIR), 839 to 899 (LGCQ…FCKE), and 900 to 960 (VNCS…LCKY). Cystine bridges form between cysteine 82/cysteine 124, cysteine 110/cysteine 138, cysteine 146/cysteine 189, cysteine 175/cysteine 202, cysteine 207/cysteine 248, cysteine 234/cysteine 263, cysteine 268/cysteine 317, cysteine 297/cysteine 334, cysteine 343/cysteine 385, cysteine 371/cysteine 398, cysteine 402/cysteine 445, cysteine 431/cysteine 458, cysteine 463/cysteine 501, cysteine 487/cysteine 514, cysteine 519/cysteine 568, cysteine 548/cysteine 585, cysteine 594/cysteine 636, cysteine 622/cysteine 649, cysteine 654/cysteine 689, cysteine 675/cysteine 704, cysteine 709/cysteine 752, cysteine 738/cysteine 769, cysteine 778/cysteine 820, cysteine 806/cysteine 833, cysteine 841/cysteine 884, and cysteine 870/cysteine 897. Asparagine 276, asparagine 316, asparagine 364, and asparagine 380 each carry an N-linked (GlcNAc...) asparagine glycan. Asparagine 484 is a glycosylation site (N-linked (GlcNAc...) asparagine). Asparagine 527 carries N-linked (GlcNAc...) asparagine glycosylation. Residues asparagine 615 and asparagine 639 are each glycosylated (N-linked (GlcNAc...) asparagine). N-linked (GlcNAc...) asparagine glycosylation occurs at asparagine 694. N-linked (GlcNAc...) asparagine glycosylation is found at asparagine 754, asparagine 790, asparagine 813, asparagine 823, and asparagine 851. N-linked (GlcNAc...) asparagine glycosylation is present at asparagine 901. Disulfide bonds link cysteine 902/cysteine 945 and cysteine 931/cysteine 958. The helical transmembrane segment at 964-990 (STIPLICGISVGSALIILMSVGFCMIL) threads the bilayer. At 991–1025 (KHRESNYYTKTRPKEGALHLETREVYSIDPYNPAS) the chain is on the cytoplasmic side.

Belongs to the receptors of complement activation (RCA) family. Interacts (via Sushi domain 1 and 2) with C3. Interacts with CD19. Part of a complex composed of CD19, CR2/CD21, CD81 and IFITM1/CD225 in the membrane of mature B-cells. Interacts (via Sushi domain 1 and 2) with FCER2 (via the C-terminus). Interacts with CD23. Interacts with FCRL5. Interacts with CR1. Interacts with INFNA1. B-lymphocytes.

The protein resides in the cell membrane. Functionally, serves as a receptor for various ligands including complement component CD3d, HNRNPU OR IFNA1. When C3d is bound to antigens, attaches to C3d on B-cell surface and thereby facilitates the recognition and uptake of antigens by B-cells. This interaction enhances B-cell activation and subsequent immune responses. Forms a complex with several partners on the surface of B-cells including CD19, FCRL5 and CD81, to form the B-cell coreceptor complex that plays a crucial role in B-cell activation and signaling. Also induces specific intracellular signaling separately from the BCR and CD19 by activating the tyrosine kinase SRC, which then phosphorylates nucleolin/NCL and triggers AKT and GSK3 kinase activities in a SYK/CD19-independent manner. Acts as a ligand for CD23 (FcepsilonRII), a low-affinity receptor for IgE, which is expressed on B-cells and other immune cells, and thus participates in the regulation of IgE production. In Mus musculus (Mouse), this protein is Complement receptor type 2 (Cr2).